A 235-amino-acid chain; its full sequence is Ribonuclease 3 (235 aa).

Positions 6-131 (IDQLFKLTGH…LIAVMYLDGG (126 aa)) constitute an RNase III domain. Mg(2+) is bound at residue glutamate 44. Residue aspartate 48 is part of the active site. Mg(2+)-binding residues include aspartate 117 and glutamate 120. Residue glutamate 120 is part of the active site. The 70-residue stretch at 156-225 (DAKTELQEWA…AEKILRREGV (70 aa)) folds into the DRBM domain.

Belongs to the ribonuclease III family. As to quaternary structure, homodimer. The cofactor is Mg(2+).

It localises to the cytoplasm. It carries out the reaction Endonucleolytic cleavage to 5'-phosphomonoester.. In terms of biological role, digests double-stranded RNA. Involved in the processing of primary rRNA transcript to yield the immediate precursors to the large and small rRNAs (23S and 16S). Processes some mRNAs, and tRNAs when they are encoded in the rRNA operon. Processes pre-crRNA and tracrRNA of type II CRISPR loci if present in the organism. The chain is Ribonuclease 3 from Bartonella tribocorum (strain CIP 105476 / IBS 506).